A 143-amino-acid chain; its full sequence is Transcriptional regulator MraZ (143 aa).

2 consecutive SpoVT-AbrB domains span residues 5–47 and 76–119; these read EYSH…PQKE and AAEC…SQEL.

Belongs to the MraZ family. In terms of assembly, forms oligomers.

It localises to the cytoplasm. Its subcellular location is the nucleoid. The protein is Transcriptional regulator MraZ of Carboxydothermus hydrogenoformans (strain ATCC BAA-161 / DSM 6008 / Z-2901).